The following is an 88-amino-acid chain: RNA-binding protein Hfq (88 aa).

The region spanning 9 to 68 (DPFLNALRCERIPVSIYLVNGIKLQGQIESFDQFVILLKNTVNQMVYKHAISTVVPARAV) is the Sm domain. The segment at 66-88 (RAVSHHTASDRPQGERPQETTEE) is disordered. The segment covering 72 to 88 (TASDRPQGERPQETTEE) has biased composition (basic and acidic residues).

Belongs to the Hfq family. As to quaternary structure, homohexamer.

Functionally, RNA chaperone that binds small regulatory RNA (sRNAs) and mRNAs to facilitate mRNA translational regulation in response to envelope stress, environmental stress and changes in metabolite concentrations. Also binds with high specificity to tRNAs. This is RNA-binding protein Hfq from Aliivibrio salmonicida (strain LFI1238) (Vibrio salmonicida (strain LFI1238)).